Reading from the N-terminus, the 390-residue chain is Endothelial cell-selective adhesion molecule (390 aa).

An N-terminal signal peptide occupies residues 1 to 29; sequence MISLPGPLVTNLLRFLFLGLSALAPPSRA. Residues 30–143 enclose the Ig-like V-type domain; that stretch reads ELQLHLPANQ…NGQASGHSIK (114 aa). The Extracellular portion of the chain corresponds to 30-248; sequence ELQLHLPANQ…LEVSTGPGAA (219 aa). 4 N-linked (GlcNAc...) asparagine glycosylation sites follow: N108, N169, N213, and N236. The region spanning 156–242 is the Ig-like C2-type domain; that stretch reads PSCRLQGVPR…AQCNVTLEVS (87 aa). Cysteines 174 and 224 form a disulfide. The chain crosses the membrane as a helical span at residues 249–269; it reads VVAGAVVGTLVGLGLLAGLVL. The Cytoplasmic portion of the chain corresponds to 270–390; that stretch reads LYHRRGKALE…PAQSQAGSLV (121 aa). S301 is modified (phosphoserine). Residues 316 to 365 form a disordered region; the sequence is ARALRPPHGPPRPGALTPTPSLSSQALPSPRLPTTDGANPQPISLIPGGV. Phosphothreonine is present on residues T332 and T334. Over residues 333-342 the composition is skewed to polar residues; the sequence is PTPSLSSQAL. Phosphoserine is present on residues S336, S339, S344, and S371.

As to quaternary structure, interacts with MAGI1.

It is found in the cell junction. The protein resides in the adherens junction. The protein localises to the tight junction. It localises to the cell membrane. Its function is as follows. Can mediate aggregation most likely through a homophilic molecular interaction. In Macaca fascicularis (Crab-eating macaque), this protein is Endothelial cell-selective adhesion molecule (ESAM).